Reading from the N-terminus, the 933-residue chain is 2-oxoglutarate dehydrogenase E1 component (933 aa).

The protein belongs to the alpha-ketoglutarate dehydrogenase family. As to quaternary structure, homodimer. Part of the 2-oxoglutarate dehydrogenase (OGDH) complex composed of E1 (2-oxoglutarate dehydrogenase), E2 (dihydrolipoamide succinyltransferase) and E3 (dihydrolipoamide dehydrogenase); the complex contains multiple copies of the three enzymatic components (E1, E2 and E3). Interacts (via N-terminus) with SucB, the E2 component of OGDH complex. Thiamine diphosphate is required as a cofactor.

It catalyses the reaction N(6)-[(R)-lipoyl]-L-lysyl-[protein] + 2-oxoglutarate + H(+) = N(6)-[(R)-S(8)-succinyldihydrolipoyl]-L-lysyl-[protein] + CO2. Its function is as follows. E1 component of the 2-oxoglutarate dehydrogenase (OGDH) complex which catalyzes the decarboxylation of 2-oxoglutarate, the first step in the conversion of 2-oxoglutarate to succinyl-CoA and CO(2). The chain is 2-oxoglutarate dehydrogenase E1 component (sucA) from Escherichia coli O157:H7.